The chain runs to 274 residues: Large ribosomal subunit protein uL2 (274 aa).

The tract at residues 220–265 is disordered; the sequence is VRGAAMNPRDHPHGGGEGRAPRGMSTPKTKWGKPARGVKTRHNPRF. Over residues 227 to 239 the composition is skewed to basic and acidic residues; that stretch reads PRDHPHGGGEGRA. Basic residues predominate over residues 249-262; the sequence is KWGKPARGVKTRHN.

Belongs to the universal ribosomal protein uL2 family. Part of the 50S ribosomal subunit. Forms a bridge to the 30S subunit in the 70S ribosome.

Functionally, one of the primary rRNA binding proteins. Required for association of the 30S and 50S subunits to form the 70S ribosome, for tRNA binding and peptide bond formation. It has been suggested to have peptidyltransferase activity; this is somewhat controversial. Makes several contacts with the 16S rRNA in the 70S ribosome. The protein is Large ribosomal subunit protein uL2 of Chloroflexus aurantiacus (strain ATCC 29364 / DSM 637 / Y-400-fl).